The sequence spans 305 residues: Phosphatidylglycerol--prolipoprotein diacylglyceryl transferase (305 aa).

The next 3 membrane-spanning stretches (helical) occupy residues 10-30 (FLISFTLFGLPIVVRWYGAII), 59-79 (LMLGLVLGIAGARIYYVAFEW), and 92-112 (LTTGGIAIHGAIIGALLSTVI). Arginine 140 contacts a 1,2-diacyl-sn-glycero-3-phospho-(1'-sn-glycerol). The next 2 helical transmembrane spans lie at 182 to 202 (LFHPTFLYESVWNLVGVGILL) and 260 to 280 (IRVAQLVSMVAIVVCGVLIFL).

It belongs to the Lgt family.

The protein resides in the cell membrane. It catalyses the reaction L-cysteinyl-[prolipoprotein] + a 1,2-diacyl-sn-glycero-3-phospho-(1'-sn-glycerol) = an S-1,2-diacyl-sn-glyceryl-L-cysteinyl-[prolipoprotein] + sn-glycerol 1-phosphate + H(+). Its pathway is protein modification; lipoprotein biosynthesis (diacylglyceryl transfer). Its function is as follows. Catalyzes the transfer of the diacylglyceryl group from phosphatidylglycerol to the sulfhydryl group of the N-terminal cysteine of a prolipoprotein, the first step in the formation of mature lipoproteins. The sequence is that of Phosphatidylglycerol--prolipoprotein diacylglyceryl transferase from Chloroflexus aggregans (strain MD-66 / DSM 9485).